Reading from the N-terminus, the 923-residue chain is Phosphoenolpyruvate carboxylase (923 aa).

Active-site residues include H149 and K585.

The protein belongs to the PEPCase type 1 family. Requires Mg(2+) as cofactor.

The catalysed reaction is oxaloacetate + phosphate = phosphoenolpyruvate + hydrogencarbonate. Forms oxaloacetate, a four-carbon dicarboxylic acid source for the tricarboxylic acid cycle. The polypeptide is Phosphoenolpyruvate carboxylase (Nocardia farcinica (strain IFM 10152)).